The chain runs to 806 residues: Leucine--tRNA ligase (806 aa).

Residues 40–51 carry the 'HIGH' region motif; that stretch reads PYPSGSGLHVGH. Residues 576–580 carry the 'KMSKS' region motif; sequence KMSKS. Residue Lys-579 coordinates ATP.

Belongs to the class-I aminoacyl-tRNA synthetase family.

It is found in the cytoplasm. It catalyses the reaction tRNA(Leu) + L-leucine + ATP = L-leucyl-tRNA(Leu) + AMP + diphosphate. This Chlorobium phaeobacteroides (strain BS1) protein is Leucine--tRNA ligase.